Consider the following 309-residue polypeptide: Aromatic prenyltransferase (309 aa).

It belongs to the aromatic prenyltransferase family.

In terms of biological role, prenyltransferase that attaches isoprenoid moieties to carbon atoms of aromatic substrates in an enzyme-catalyzed Friedel-Crafts reaction. Shows specificity for dimethylallyl diphosphate (DMAPP) and does not accept geranyl diphosphate (GPP) or isopentenyl diphosphate (IPP). Prenylates the artificial substrate 2,7-dihydroxynaphthalene (2,7-DHN), as well as dihydrophenazine-1-carboxylic acid and 4-hydroxybenzoic acid at lower levels. Only traces of products are detected with aspulvinone E or flaviolin as substrates; and no product is formed with L-tryptophan, L-tyrosine, or 4-hydroxyphenylpyruvate. Ptf seems no to be involved in the prenylation reaction in the biosynthesis of aspulvinone H and J and the physiological function of ptf remains unknown. The protein is Aromatic prenyltransferase of Sclerotinia sclerotiorum (strain ATCC 18683 / 1980 / Ss-1) (White mold).